The sequence spans 973 residues: Sodium/calcium exchanger 1 (973 aa).

Residues 1–35 form the signal peptide; it reads MYNMRRLSLSPTFSMGFHLLVTVSLLFSHVDHVIA. The Extracellular segment spans residues 36–74; that stretch reads ETEMEGEGNETGECTGSYYCKKGVILPIWEPQDPSFGDK. The N-linked (GlcNAc...) asparagine glycan is linked to asparagine 44. Residues 75–95 traverse the membrane as a helical segment; sequence IARATVYFVAMVYMFLGVSII. The Cytoplasmic segment spans residues 96–136; that stretch reads ADRFMSSIEVITSQEKEITIKKPNGETTKTTVRIWNETVSN. Residues 137-157 form a helical membrane-spanning segment; that stretch reads LTLMALGSSAPEILLSVIEVC. An Alpha-1 repeat occupies 141–181; that stretch reads ALGSSAPEILLSVIEVCGHNFTAGDLGPSTIVGSAAFNMFI. Over 158–170 the chain is Extracellular; sequence GHNFTAGDLGPST. A glycan (N-linked (GlcNAc...) asparagine) is linked at asparagine 160. A helical membrane pass occupies residues 171 to 191; sequence IVGSAAFNMFIIIALCVYVVP. Topologically, residues 192 to 204 are cytoplasmic; the sequence is DGETRKIKHLRVF. Residues 205–225 form a helical membrane-spanning segment; it reads FVTAAWSIFAYTWLYIILSVI. Topologically, residues 226-231 are extracellular; sequence SPGVVE. The helical transmembrane segment at 232-252 threads the bilayer; it reads VWEGLLTFFFFPICVVFAWVA. The Cytoplasmic segment spans residues 253–800; the sequence is DRRLLFYKYV…FVPPTEYWNG (548 aa). The putative calmodulin-binding region stretch occupies residues 254 to 273; sequence RRLLFYKYVYKRYRAGKQRG. Phosphoserine is present on residues serine 285 and serine 392. 2 Calx-beta domains span residues 396 to 496 and 527 to 627; these read VNTE…VHLS and ATVT…LEIG. Residues glutamate 420, aspartate 456, aspartate 481, aspartate 482, isoleucine 484, glutamate 486, glutamate 489, aspartate 533, aspartate 534, aspartate 535, glutamate 551, aspartate 587, aspartate 613, glutamate 614, glutamate 615, and glutamate 718 each contribute to the Ca(2+) site. Residues 801 to 821 form a helical membrane-spanning segment; the sequence is WACFIVSILMIGLLTAFIGDL. The Extracellular portion of the chain corresponds to 822-824; it reads ASH. The helical transmembrane segment at 825 to 845 threads the bilayer; it reads FGCTIGLKDSVTAVVFVALGT. An Alpha-2 repeat occupies 842-878; that stretch reads ALGTSVPDTFASKVAATQDQYADASIGNVTGSNAVNV. Residues 846–874 are Cytoplasmic-facing; the sequence is SVPDTFASKVAATQDQYADASIGNVTGSN. Residues 875-895 form a helical membrane-spanning segment; that stretch reads AVNVFLGIGVAWSIAAIYHAA. Over 896-906 the chain is Extracellular; the sequence is NGEQFKVSPGT. A helical membrane pass occupies residues 907–927; the sequence is LAFSVTLFTIFAFINVGVLLY. Over 928–944 the chain is Cytoplasmic; sequence RRRPEIGGELGGPRTAK. A helical membrane pass occupies residues 945-965; it reads LLTSCLFVLLWLLYIFFSSLE. At 966 to 973 the chain is on the extracellular side; the sequence is AYCHIKGF.

Belongs to the Ca(2+):cation antiporter (CaCA) (TC 2.A.19) family. SLC8 subfamily. In terms of tissue distribution, detected primarily in heart and at lower levels in brain. Expressed in cardiac sarcolemma, brain, kidney, liver, pancreas, skeletal muscle, placenta and lung.

The protein localises to the cell membrane. The catalysed reaction is Ca(2+)(in) + 3 Na(+)(out) = Ca(2+)(out) + 3 Na(+)(in). Activated by micromolar levels of Ca(2+). Functionally, mediates the exchange of one Ca(2+) ion against three to four Na(+) ions across the cell membrane, and thereby contributes to the regulation of cytoplasmic Ca(2+) levels and Ca(2+)-dependent cellular processes. Contributes to Ca(2+) transport during excitation-contraction coupling in muscle. In a first phase, voltage-gated channels mediate the rapid increase of cytoplasmic Ca(2+) levels due to release of Ca(2+) stores from the endoplasmic reticulum. SLC8A1 mediates the export of Ca(2+) from the cell during the next phase, so that cytoplasmic Ca(2+) levels rapidly return to baseline. Required for normal embryonic heart development and the onset of heart contractions. This chain is Sodium/calcium exchanger 1 (SLC8A1), found in Homo sapiens (Human).